Reading from the N-terminus, the 64-residue chain is Conotoxin Pn-B01122 (64 aa).

The N-terminal stretch at Met1–Ala22 is a signal peptide. A propeptide spanning residues Arg23–Asn48 is cleaved from the precursor.

Belongs to the conotoxin T superfamily. In terms of processing, contains 2 disulfide bonds that can be either 'C1-C3, C2-C4' or 'C1-C4, C2-C3', since these disulfide connectivities have been observed for conotoxins with cysteine framework V (for examples, see AC P0DQQ7 and AC P81755). As to expression, expressed by the venom duct.

It localises to the secreted. The sequence is that of Conotoxin Pn-B01122 from Conus pennaceus (Feathered cone).